A 163-amino-acid chain; its full sequence is 6,7-dimethyl-8-ribityllumazine synthase (163 aa).

Residues Phe-27, 58–60 (ALE), and 87–89 (CVV) each bind 5-amino-6-(D-ribitylamino)uracil. Position 92–93 (92–93 (DT)) interacts with (2S)-2-hydroxy-3-oxobutyl phosphate. The active-site Proton donor is His-95. Asn-120 contributes to the 5-amino-6-(D-ribitylamino)uracil binding site. A (2S)-2-hydroxy-3-oxobutyl phosphate-binding site is contributed by Arg-134.

It belongs to the DMRL synthase family.

The enzyme catalyses (2S)-2-hydroxy-3-oxobutyl phosphate + 5-amino-6-(D-ribitylamino)uracil = 6,7-dimethyl-8-(1-D-ribityl)lumazine + phosphate + 2 H2O + H(+). Its pathway is cofactor biosynthesis; riboflavin biosynthesis; riboflavin from 2-hydroxy-3-oxobutyl phosphate and 5-amino-6-(D-ribitylamino)uracil: step 1/2. Catalyzes the formation of 6,7-dimethyl-8-ribityllumazine by condensation of 5-amino-6-(D-ribitylamino)uracil with 3,4-dihydroxy-2-butanone 4-phosphate. This is the penultimate step in the biosynthesis of riboflavin. In Nitrobacter winogradskyi (strain ATCC 25391 / DSM 10237 / CIP 104748 / NCIMB 11846 / Nb-255), this protein is 6,7-dimethyl-8-ribityllumazine synthase.